The primary structure comprises 159 residues: Acetolactate synthase small subunit (159 aa).

One can recognise an ACT domain in the interval 5-79; sequence ILSILLENES…DVLKVTEIED (75 aa).

It belongs to the acetolactate synthase small subunit family. In terms of assembly, dimer of large and small chains.

It carries out the reaction 2 pyruvate + H(+) = (2S)-2-acetolactate + CO2. Its pathway is amino-acid biosynthesis; L-isoleucine biosynthesis; L-isoleucine from 2-oxobutanoate: step 1/4. It functions in the pathway amino-acid biosynthesis; L-valine biosynthesis; L-valine from pyruvate: step 1/4. This is Acetolactate synthase small subunit (ilvH) from Buchnera aphidicola subsp. Baizongia pistaciae (strain Bp).